Reading from the N-terminus, the 1079-residue chain is Intraflagellar transport protein 80 (1079 aa).

The segment at 495–514 (GDMIRPSTVQNQPSTQGLPN) is disordered. The span at 501-514 (STVQNQPSTQGLPN) shows a compositional bias: polar residues.

It is found in the cell projection. Its subcellular location is the cilium. The protein localises to the flagellum. The protein resides in the cytoplasm. It localises to the cytoskeleton. It is found in the flagellum axoneme. Its subcellular location is the flagellum basal body. In terms of biological role, component of the intraflagellar transport complex B (IFT-B) involved in flagellar assembly. This Giardia intestinalis (strain ATCC 50803 / WB clone C6) (Giardia lamblia) protein is Intraflagellar transport protein 80.